Here is a 152-residue protein sequence, read N- to C-terminus: uncharacterized protein (152 aa).

This is an uncharacterized protein from Acheta domesticus (House cricket).